Reading from the N-terminus, the 66-residue chain is Large ribosomal subunit protein bL35 (66 aa).

The segment covering 1 to 16 (MPKMKTHRGAAKRVKR) has biased composition (basic residues). Residues 1-28 (MPKMKTHRGAAKRVKRTGSGQLKRSRAF) are disordered.

This sequence belongs to the bacterial ribosomal protein bL35 family.

The protein is Large ribosomal subunit protein bL35 of Staphylococcus epidermidis (strain ATCC 35984 / DSM 28319 / BCRC 17069 / CCUG 31568 / BM 3577 / RP62A).